A 272-amino-acid chain; its full sequence is ATP synthase subunit a (272 aa).

Transmembrane regions (helical) follow at residues 42–62, 108–128, 140–162, 177–197, 219–239, and 241–261; these read IDSLFFSVLLCLLFLVIAGFV, FVWIILMNSMDLIPIDLLPCI, ILPSADINITCAMALNIFALMIF, LIYHPFNYSLCIPINFLLEII, LIFILIAGFLPWWSQWMLSVP, and AIFHILIIILQAFIFMVLTII.

The protein belongs to the ATPase A chain family. As to quaternary structure, F-type ATPases have 2 components, CF(1) - the catalytic core - and CF(0) - the membrane proton channel. CF(1) has five subunits: alpha(3), beta(3), gamma(1), delta(1), epsilon(1). CF(0) has three main subunits: a(1), b(2) and c(9-12). The alpha and beta chains form an alternating ring which encloses part of the gamma chain. CF(1) is attached to CF(0) by a central stalk formed by the gamma and epsilon chains, while a peripheral stalk is formed by the delta and b chains.

The protein localises to the cell inner membrane. In terms of biological role, key component of the proton channel; it plays a direct role in the translocation of protons across the membrane. This chain is ATP synthase subunit a, found in Blochmanniella floridana.